The chain runs to 241 residues: Large ribosomal subunit protein bL25 (241 aa).

The disordered stretch occupies residues 214–241 (LDAVKAGEEGSRAQQETEEASERADQGQ).

It belongs to the bacterial ribosomal protein bL25 family. CTC subfamily. In terms of assembly, part of the 50S ribosomal subunit; part of the 5S rRNA/L5/L18/L25 subcomplex. Contacts the 5S rRNA. Binds to the 5S rRNA independently of L5 and L18.

In terms of biological role, this is one of the proteins that binds to the 5S RNA in the ribosome where it forms part of the central protuberance. The sequence is that of Large ribosomal subunit protein bL25 from Deinococcus geothermalis (strain DSM 11300 / CIP 105573 / AG-3a).